We begin with the raw amino-acid sequence, 151 residues long: Cytochrome c-type biogenesis protein CcmE (151 aa).

Residues 1–8 (MNPQRKKR) are Cytoplasmic-facing. A helical; Signal-anchor for type II membrane protein transmembrane segment spans residues 9–29 (LLLIVGLLVGVGVAVGFALSA). At 30-151 (LQQNINLFYT…QAAAGGETKP (122 aa)) the chain is on the periplasmic side. Heme-binding residues include histidine 124 and tyrosine 128.

The protein belongs to the CcmE/CycJ family.

The protein localises to the cell inner membrane. Its function is as follows. Heme chaperone required for the biogenesis of c-type cytochromes. Transiently binds heme delivered by CcmC and transfers the heme to apo-cytochromes in a process facilitated by CcmF and CcmH. The chain is Cytochrome c-type biogenesis protein CcmE from Pseudomonas putida (strain ATCC 700007 / DSM 6899 / JCM 31910 / BCRC 17059 / LMG 24140 / F1).